The primary structure comprises 378 residues: UDP-N-acetylenolpyruvoylglucosamine reductase (378 aa).

Positions 15 to 185 (VGGTPERLLE…LSVDLELADH (171 aa)) constitute an FAD-binding PCMH-type domain. R163 is a catalytic residue. S248 functions as the Proton donor in the catalytic mechanism. E370 is a catalytic residue.

Belongs to the MurB family. Requires FAD as cofactor.

The protein resides in the cytoplasm. The enzyme catalyses UDP-N-acetyl-alpha-D-muramate + NADP(+) = UDP-N-acetyl-3-O-(1-carboxyvinyl)-alpha-D-glucosamine + NADPH + H(+). Its pathway is cell wall biogenesis; peptidoglycan biosynthesis. Its function is as follows. Cell wall formation. The polypeptide is UDP-N-acetylenolpyruvoylglucosamine reductase (Leifsonia xyli subsp. xyli (strain CTCB07)).